The sequence spans 1207 residues: MIDVNNFHYMKIGLASPEKIRSWSYGEVKKPETINYRTLKPEKDGLFCERIFGPTKDWECSCGKYKRVRYKGMVCDRCGVEVTKSKVRRERMGHIELAAPVSHIWYFKGIPSRMGLLLDMSPRALEEVIYFASYVVVDPGPTGLEKKTLLSEAEFREYYDKYPNQFVAKMGAEGIKDLLEEIDLDEELKELRDELESATGQRLTRAIKRLEVVESFRNSGNNPSWMILDVLPIIPPEIRPMVQLDGGRFATSDLNDLYRRVINRNNRLKRLLDLGAPGIIVQNEKRMLQEAVDALIDNGRRGRPVTGPGNRPLKSLSHMLKGKQGRFRQNLLGKRVDYSGRSVIAVGPSLKMYQCGLPKEMALELFKPFVMKELVQREIATNIKNAKSKIERMDDEVWDVLEDVITEHPVLLNRAPTLHRLGIQAFEPTLVEGRAIRLHPLVTTAYNADFDGDQMAVHVPLSKEAQAEARMLMLAAQNILNPKDGKPVVTPSQDMVLGNYYLTLERKDAVNTGAIFNDTNEVLKAYANGYVHLHTRIGVHANSFNNPTFTDEQNSKILATSVGKIIFNEIIPDSFAYINEPSQANLERTTPDKYFVDPTQLGEGGLKEYFDNTELIEPFNKKFLGNIIAEVFNRFSITDTSMMLDRMKDLGFKFSSKAGITVGVSDIVVLPDKQDILDEHEKLVERVTKQYNRGLITEDERYNAVVEIWTDAKDQIQGELMQSLEKTNPIFMMSDSGARGNASNFTQLAGMRGLMAAPSGKIIELPITSSFREGLTVLEYFISTHGARKGLADTALKTADSGYLTRRLVDVAQDVIVREEDCGTDRGLLVSDIKEGTEMIEPFIERIEGRYSKETIRHPETDEVIIRPDELITPDIAKQITDAGIEQMYIRSAFTCNTRHGVCEKCYGKNLATGEKVEVGEAVGTIAAQSIGEPGTQLTMRTFHTGGVAGSDITQGLPRIQEIFEARNPKGQAVITEIEGVVDDIKLAKDRQQEIIVKGANETRSYLASGTSRLKVEIGQSVERGEVLTEGSIEPKNYLSVAGLNATESYLLKEVQKVYRMQGVEIDDKHVEVMVRQMLRKVRIIEAGDTKLLPGSLVDIHNFTDANRDAFKHRKRPATAKPVLLGITKASLETESFLSAASFQETTRVLTDAAIKGKRDDLLGLKENVIIGKLIPAGTGMRRYSDIQYDKATAPVTETSEEVETIE.

Zn(2+) contacts are provided by Cys-60, Cys-62, Cys-75, and Cys-78. The Mg(2+) site is built by Asp-449, Asp-451, and Asp-453. Cys-822, Cys-896, Cys-903, and Cys-906 together coordinate Zn(2+).

The protein belongs to the RNA polymerase beta' chain family. The RNAP catalytic core consists of 2 alpha, 1 beta, 1 beta' and 1 omega subunit. When a sigma factor is associated with the core the holoenzyme is formed, which can initiate transcription. Requires Mg(2+) as cofactor. It depends on Zn(2+) as a cofactor.

The enzyme catalyses RNA(n) + a ribonucleoside 5'-triphosphate = RNA(n+1) + diphosphate. Functionally, DNA-dependent RNA polymerase catalyzes the transcription of DNA into RNA using the four ribonucleoside triphosphates as substrates. This chain is DNA-directed RNA polymerase subunit beta', found in Staphylococcus epidermidis (strain ATCC 35984 / DSM 28319 / BCRC 17069 / CCUG 31568 / BM 3577 / RP62A).